The primary structure comprises 173 residues: Thiol-disulfide oxidoreductase ResA (173 aa).

The chain crosses the membrane as a helical; Signal-anchor for type II membrane protein span at residues 10–29 (VIILLILCGAVGFTLYQGFF). The 139-residue stretch at 35-173 (MQIGKEAPNF…LEGYLQKITP (139 aa)) folds into the Thioredoxin domain. A disulfide bridge links C73 with C76.

The protein belongs to the thioredoxin family. ResA subfamily.

The protein localises to the cell membrane. The protein operates within protein modification; cytochrome c assembly. Its function is as follows. Thiol-disulfide oxidoreductase which is required in disulfide reduction during c-type cytochrome synthesis. May accept reducing equivalents from CcdA, leading to breakage of disulfide bonds in apocytochrome c; following this reduction heme can be covalently attached. This chain is Thiol-disulfide oxidoreductase ResA, found in Bacillus cereus (strain ZK / E33L).